The chain runs to 341 residues: Probable cytosolic iron-sulfur protein assembly protein Ciao1 (341 aa).

WD repeat units lie at residues 12–51 (GHAGRVWSAAWHPGGKLFASCGEDKTIRVWNKSDTDRWVA), 58–97 (GHTRTIRELAWSCCGHYLASASFDTTVAVWDKKSGEFECN), 102–141 (GHDNEVKSVTWSRSGNLLATCSRDKSVWIWEIHHAPDQED), 151–190 (GHTQDVKKVCWHPQEDLLASASYDNTIRMYRQDLADSEWE), 197–236 (SHSSTVWSISFDATGQRLASCSEDTTVKVWQQYGPDNALG), 255–294 (YHSRSVYDIDWCKQTGLLATACGDDTVRIFREASDSDRNE), and 305–341 (AHSQDANKVAWHPTVPGLLLTASDDGEIKLWQYVDAD).

This sequence belongs to the WD repeat CIA1 family.

Essential component of the cytosolic iron-sulfur (Fe/S) protein assembly machinery. Required for the maturation of extramitochondrial Fe/S proteins. The chain is Probable cytosolic iron-sulfur protein assembly protein Ciao1 from Anopheles gambiae (African malaria mosquito).